Here is a 334-residue protein sequence, read N- to C-terminus: Protein-methionine-sulfoxide reductase catalytic subunit MsrP (334 aa).

The tat-type signal signal peptide spans 1–44; that stretch reads MKKIRKLTEADVTAESAFFMQRRQVLKALGISAAALSLPNAAHA. Mo-molybdopterin is bound by residues N88, 91–92, C146, T181, N233, R238, and 249–251; these read YE and GIK.

Belongs to the MsrP family. In terms of assembly, heterodimer of a catalytic subunit (MsrP) and a heme-binding subunit (MsrQ). It depends on Mo-molybdopterin as a cofactor. In terms of processing, predicted to be exported by the Tat system. The position of the signal peptide cleavage has not been experimentally proven.

It localises to the periplasm. The enzyme catalyses L-methionyl-[protein] + a quinone + H2O = L-methionyl-(S)-S-oxide-[protein] + a quinol. It carries out the reaction L-methionyl-[protein] + a quinone + H2O = L-methionyl-(R)-S-oxide-[protein] + a quinol. In terms of biological role, part of the MsrPQ system that repairs oxidized periplasmic proteins containing methionine sulfoxide residues (Met-O), using respiratory chain electrons. Thus protects these proteins from oxidative-stress damage caused by reactive species of oxygen and chlorine generated by the host defense mechanisms. MsrPQ is essential for the maintenance of envelope integrity under bleach stress, rescuing a wide series of structurally unrelated periplasmic proteins from methionine oxidation, including the primary periplasmic chaperone SurA and the lipoprotein Pal. The catalytic subunit MsrP is non-stereospecific, being able to reduce both (R-) and (S-) diastereoisomers of methionine sulfoxide. This is Protein-methionine-sulfoxide reductase catalytic subunit MsrP from Escherichia fergusonii (strain ATCC 35469 / DSM 13698 / CCUG 18766 / IAM 14443 / JCM 21226 / LMG 7866 / NBRC 102419 / NCTC 12128 / CDC 0568-73).